The chain runs to 107 residues: Endonuclease ALBA3 (107 aa).

N6-acetyllysine occurs at positions 23 and 32.

Belongs to the histone-like Alba family. As to quaternary structure, homodimer. Interacts (acetylated and unacetylated) with Sir2A. It depends on a divalent metal cation as a cofactor. Acetylated. Exists in both acetylated and unacetylated forms but predominantly in an acetylated form. Deacetylated by Sir2A.

The protein localises to the nucleus. It is found in the chromosome. The protein resides in the telomere. Its subcellular location is the cytoplasm. With respect to regulation, mild acetylation lowers protein interaction with DNA and high acetylation abolishes DNA-binding activity. DNA binding and endonuclease activity is modulated via deacetylation of Lys-23 by Sir2A. Inhibited in the presence of EDTA and EGTA. Its function is as follows. Possesses DNA-binding and endonuclease activities. Binds DNA cooperatively in sequence-independent manner at the DNA minor groove. Exhibits apurinic/apyrimidinic site-driven endonuclease activity. Binds RNA; shows high affinity for poly(A) and a lower affinity for poly(U) templates. In vitro, prevents transcription after DNA binding. Associates with the telomeric region, the subtelomeric TARE6 repeat sequence and the var gene promoters. In Plasmodium falciparum (isolate 3D7), this protein is Endonuclease ALBA3.